Reading from the N-terminus, the 706-residue chain is G2/M phase-specific E3 ubiquitin-protein ligase (706 aa).

A C2HC pre-PHD-type zinc finger spans residues 11–51 (NLACVFCRKHDDCPNKYGEKKTKEKWNLTVHYYCLLMSSGI). The PHD-type 1 zinc-finger motif lies at 79–128 (LKCCVCKKNGASIGCVAPRCKRSYHFPCGLQRECIFQFTGNFASFCWDHR). The segment at 143-193 (PCTICLEFIEPIPSYNILRSPCCKNAWFHRDCLQVQAINAGVFFFRCTICN) adopts a PHD-type 2; degenerate zinc-finger fold. The PHD-type 3 zinc-finger motif lies at 237–286 (RCRCKEGRDYNAPDSKWEIKRCQCCGSSGTHLACSSLRSWEQNWECLECR). The 328-residue stretch at 371–698 (IWNSALDAFR…IRNTLRLEKE (328 aa)) folds into the HECT domain.

As to expression, predominantly expressed in brain, liver, kidney, testes and ovary.

It is found in the nucleus. It localises to the nucleolus. The protein resides in the cytoplasm. The enzyme catalyses S-ubiquitinyl-[E2 ubiquitin-conjugating enzyme]-L-cysteine + [acceptor protein]-L-lysine = [E2 ubiquitin-conjugating enzyme]-L-cysteine + N(6)-ubiquitinyl-[acceptor protein]-L-lysine.. The protein operates within protein modification; protein ubiquitination. E3 ubiquitin-protein ligase which accepts ubiquitin from an E2 ubiquitin-conjugating enzyme in the form of a thioester and then directly transfers the ubiquitin to targeted substrates. Essential in early embryonic development to prevent apoptotic death. The polypeptide is G2/M phase-specific E3 ubiquitin-protein ligase (G2E3) (Homo sapiens (Human)).